The primary structure comprises 244 residues: Protein TIFY 10b (244 aa).

The Tify domain occupies Q97–K132. The disordered stretch occupies residues Q174 to Q244. The Jas motif lies at P185–Q210. Positions A187–R194 match the Nuclear localization signal motif. Over residues R194–N204 the composition is skewed to basic and acidic residues.

Belongs to the TIFY/JAZ family. In terms of assembly, interacts with BHLH148. Interacts with COI1A and COI1B in a coronatine-dependent manner. Coronatine is an analog of jasmonoyl isoleucine (JA-Ile). Ubiquitinated. Targeted for degradation by the SCF(COI1) E3 ubiquitin ligase-proteasome pathway during jasmonate signaling.

The protein resides in the nucleus. Repressor of jasmonate responses. This Oryza sativa subsp. japonica (Rice) protein is Protein TIFY 10b.